The following is a 160-amino-acid chain: FMRFamide-like neuropeptides 13 (160 aa).

The N-terminal stretch at 1–17 is a signal peptide; the sequence is MMTSLLTISMFVVAIQA. Residues 18–43 constitute a propeptide that is removed on maturation; it reads FDSSEIRMLDEQYDTKNPFFQFLENS. Phenylalanine amide occurs at positions 60, 73, 85, 98, 110, 123, 135, 146, and 157.

This sequence belongs to the FARP (FMRFamide related peptide) family. Expressed in the ASE sensory neurons, the DD motor neurons, the 15, M3 and M5 cholinergic pharyngeal motoneurons, and the ASG, ASK and BAG neurons.

The protein resides in the secreted. Functionally, probable FMRFamide-like neuropeptides. Binds to neuronal receptors such as dmsr-1 to promote sleep in response to cellular stress also known as stress-induced sleep (SIS). Plays a role in behaviors associated with SIS, acting in concert with the FMRFamide related peptide, flp-24 and neuropeptide-like protein nlp-8. In terms of biological role, AADGAPLIRF-amide: Inhibits muscle tension in somatic muscle. Acts as a ligand for the npr-22 receptor in vitro. Acts as a ligand for isoform a of the dmsr-1 G-protein coupled receptor in vitro. Its function is as follows. APEASPFIRF-amide: Inhibits muscle tension in somatic muscle. Potent inhibitor of the activity of the dissected pharyngeal myogenic muscle system. Acts as a ligand for isoform a of the dmsr-1 G-protein coupled receptor in vitro. Acts as a ligand for the npr-22 receptor in vitro. Acts as a ligand for isoform a of the dmsr-1 G-protein coupled receptor in vitro. Functionally, acts as a ligand for isoform a of the dmsr-1 G-protein coupled receptor in vitro. The polypeptide is FMRFamide-like neuropeptides 13 (Caenorhabditis elegans).